Consider the following 446-residue polypeptide: Adenylosuccinate synthetase (446 aa).

GTP contacts are provided by residues 20–26 and 48–50; these read GDEGKGK and GHT. D21 acts as the Proton acceptor in catalysis. Positions 21 and 48 each coordinate Mg(2+). Residues 21–24, 46–49, T137, R151, Q232, T247, and R319 each bind IMP; these read DEGK and NAGH. The Proton donor role is filled by H49. Position 315–321 (315–321) interacts with substrate; the sequence is SVTGRPR. GTP contacts are provided by residues R321, 347-349, and 429-431; these read KLD and STG.

It belongs to the adenylosuccinate synthetase family. In terms of assembly, homodimer. The cofactor is Mg(2+).

The protein resides in the cytoplasm. It catalyses the reaction IMP + L-aspartate + GTP = N(6)-(1,2-dicarboxyethyl)-AMP + GDP + phosphate + 2 H(+). It participates in purine metabolism; AMP biosynthesis via de novo pathway; AMP from IMP: step 1/2. Functionally, plays an important role in the de novo pathway of purine nucleotide biosynthesis. Catalyzes the first committed step in the biosynthesis of AMP from IMP. In Polynucleobacter necessarius subsp. necessarius (strain STIR1), this protein is Adenylosuccinate synthetase.